The chain runs to 114 residues: Cell cycle protein GpsB (114 aa).

A coiled-coil region spans residues 42–77; sequence YQKMADMNNEVVKLSEENHKLKKELEELRLRVATSR. A disordered region spans residues 74 to 99; that stretch reads ATSRPQDNKSFSSNNTTTNTSSNNVD. Low complexity predominate over residues 85–97; sequence SSNNTTTNTSSNN.

This sequence belongs to the GpsB family. As to quaternary structure, forms polymers through the coiled coil domains. Interacts with PBP1, MreC and EzrA.

The protein localises to the cytoplasm. In terms of biological role, divisome component that associates with the complex late in its assembly, after the Z-ring is formed, and is dependent on DivIC and PBP2B for its recruitment to the divisome. Together with EzrA, is a key component of the system that regulates PBP1 localization during cell cycle progression. Its main role could be the removal of PBP1 from the cell pole after pole maturation is completed. Also contributes to the recruitment of PBP1 to the division complex. Not essential for septum formation. The polypeptide is Cell cycle protein GpsB (Staphylococcus aureus (strain Mu3 / ATCC 700698)).